Consider the following 355-residue polypeptide: Protein RecA (355 aa).

67–74 provides a ligand contact to ATP; that stretch reads GPESSGKT.

The protein belongs to the RecA family.

The protein resides in the cytoplasm. Its function is as follows. Can catalyze the hydrolysis of ATP in the presence of single-stranded DNA, the ATP-dependent uptake of single-stranded DNA by duplex DNA, and the ATP-dependent hybridization of homologous single-stranded DNAs. It interacts with LexA causing its activation and leading to its autocatalytic cleavage. This Shewanella baltica (strain OS223) protein is Protein RecA.